The primary structure comprises 158 residues: uncharacterized protein (158 aa).

Residues 12 to 73 (LDEIDRAILR…LINPFKAGYE (62 aa)) form the HTH asnC-type domain. A DNA-binding region (H-T-H motif) is located at residues 31-50 (YSEISRRINVPESTVRARVN).

This is an uncharacterized protein from Pyrococcus abyssi (strain GE5 / Orsay).